A 441-amino-acid chain; its full sequence is ATP-dependent RNA helicase RhlB (441 aa).

Residues glutamine 9–alanine 37 carry the Q motif motif. Residues leucine 40 to valine 219 form the Helicase ATP-binding domain. Alanine 53–threonine 60 is a binding site for ATP. A DEAD box motif is present at residues aspartate 165–aspartate 168. The Helicase C-terminal domain maps to lysine 243–leucine 390. The segment at arginine 401–serine 441 is disordered.

It belongs to the DEAD box helicase family. RhlB subfamily. In terms of assembly, component of the RNA degradosome, which is a multiprotein complex involved in RNA processing and mRNA degradation.

The protein resides in the cytoplasm. It catalyses the reaction ATP + H2O = ADP + phosphate + H(+). In terms of biological role, DEAD-box RNA helicase involved in RNA degradation. Has RNA-dependent ATPase activity and unwinds double-stranded RNA. The protein is ATP-dependent RNA helicase RhlB of Shewanella woodyi (strain ATCC 51908 / MS32).